Consider the following 214-residue polypeptide: Leucyl/phenylalanyl-tRNA--protein transferase (214 aa).

It belongs to the L/F-transferase family.

The protein resides in the cytoplasm. The catalysed reaction is N-terminal L-lysyl-[protein] + L-leucyl-tRNA(Leu) = N-terminal L-leucyl-L-lysyl-[protein] + tRNA(Leu) + H(+). The enzyme catalyses N-terminal L-arginyl-[protein] + L-leucyl-tRNA(Leu) = N-terminal L-leucyl-L-arginyl-[protein] + tRNA(Leu) + H(+). It carries out the reaction L-phenylalanyl-tRNA(Phe) + an N-terminal L-alpha-aminoacyl-[protein] = an N-terminal L-phenylalanyl-L-alpha-aminoacyl-[protein] + tRNA(Phe). Functionally, functions in the N-end rule pathway of protein degradation where it conjugates Leu, Phe and, less efficiently, Met from aminoacyl-tRNAs to the N-termini of proteins containing an N-terminal arginine or lysine. This is Leucyl/phenylalanyl-tRNA--protein transferase from Cereibacter sphaeroides (strain ATCC 17023 / DSM 158 / JCM 6121 / CCUG 31486 / LMG 2827 / NBRC 12203 / NCIMB 8253 / ATH 2.4.1.) (Rhodobacter sphaeroides).